The primary structure comprises 353 residues: uncharacterized protein (353 aa).

The N-terminal stretch at 1–18 (MKFVLFAQLAAVAAPAIA) is a signal peptide. The tract at residues 94-119 (EGGNVRRVPGGPSQSARQIGDSSTPM) is disordered. Residues 105–119 (PSQSARQIGDSSTPM) are compositionally biased toward polar residues. Residues Asn165 and Asn312 are each glycosylated (N-linked (GlcNAc...) asparagine).

It belongs to the glycosyl hydrolase 3 family.

It is found in the secreted. This is an uncharacterized protein from Arthroderma benhamiae (strain ATCC MYA-4681 / CBS 112371) (Trichophyton mentagrophytes).